Consider the following 357-residue polypeptide: SUN domain-containing protein 3 (357 aa).

Topologically, residues M1–K47 are nuclear. Residues I48–L64 traverse the membrane as a helical segment. Residues N65–I357 are Perinuclear space-facing. Residues R98–N146 are a coiled coil. Residues G193–G354 enclose the SUN domain.

As to quaternary structure, self-associates. Interacts with SYNE1 and SPAG4/SUN4. Proposed to form a spermatogenesis-specific LINC complex with SYNE1 during sperm head formation possibly implicating a SUN domain-based heterotrimer with SPAG4/SUN4 associating with SYNE1.

Its subcellular location is the membrane. It localises to the nucleus envelope. It is found in the nucleus inner membrane. Functionally, as a probable component of the LINC (LInker of Nucleoskeleton and Cytoskeleton) complex, involved in the connection between the nuclear lamina and the cytoskeleton. The nucleocytoplasmic interactions established by the LINC complex play an important role in the transmission of mechanical forces across the nuclear envelope and in nuclear movement and positioning. May be involved in nuclear remodeling during sperm head formation in spermatogenesis. A probable SUN3:SYNE1 LINC complex may tether spermatid nuclei to posterior cytoskeletal structures such as the manchette. The protein is SUN domain-containing protein 3 (SUN3) of Homo sapiens (Human).